The following is a 272-amino-acid chain: Arylesterase (272 aa).

In terms of domain architecture, AB hydrolase-1 spans 21 to 253 (KPVLFSHGWL…LKVYKDAPHG (233 aa)). Trp-29 provides a ligand contact to acetate. Ser-95 is an active-site residue. Residue Met-96 participates in acetate binding. Catalysis depends on residues Asp-223 and His-252.

It belongs to the AB hydrolase superfamily. Bacterial non-heme haloperoxidase / perhydrolase family. Dimer of trimers.

It catalyses the reaction a phenyl acetate + H2O = a phenol + acetate + H(+). It carries out the reaction peracetic acid + H2O = acetate + H2O2 + H(+). The catalysed reaction is a percarboxylic acid + H2O = a carboxylate + H2O2 + H(+). Its function is as follows. Hydrolyzes phenolic esters, such as phenyl acetate, nitrophenyl acetate and naphtyl acetate. Can act on a wide range of esters, but reaction rate and enantioselectivity differ significantly depending on the substrate. Shows a preference for esters with small acyl groups. Also shows low perhydrolase activity, and catalyzes the reversible formation of peroxycarboxylic acids from carboxylic acids and hydrogen peroxide. In vitro, enzyme-generated peracetic acid oxidizes bromide ion to bromonium, which reacts with monochlorodimedone to form bromochlorodimedone. This Pseudomonas fluorescens protein is Arylesterase.